Consider the following 389-residue polypeptide: Succinate--CoA ligase [ADP-forming] subunit beta (389 aa).

The ATP-grasp domain maps to 9-236 (KELFAKHGVP…RDATDPLELK (228 aa)). ATP is bound by residues Lys45, 52-54 (GRG), Ser94, and Glu99. Positions 191 and 205 each coordinate Mg(2+). Substrate contacts are provided by residues Asn256 and 318-320 (GIT).

Belongs to the succinate/malate CoA ligase beta subunit family. In terms of assembly, heterotetramer of two alpha and two beta subunits. Mg(2+) serves as cofactor.

The enzyme catalyses succinate + ATP + CoA = succinyl-CoA + ADP + phosphate. It carries out the reaction GTP + succinate + CoA = succinyl-CoA + GDP + phosphate. Its pathway is carbohydrate metabolism; tricarboxylic acid cycle; succinate from succinyl-CoA (ligase route): step 1/1. Functionally, succinyl-CoA synthetase functions in the citric acid cycle (TCA), coupling the hydrolysis of succinyl-CoA to the synthesis of either ATP or GTP and thus represents the only step of substrate-level phosphorylation in the TCA. The beta subunit provides nucleotide specificity of the enzyme and binds the substrate succinate, while the binding sites for coenzyme A and phosphate are found in the alpha subunit. The sequence is that of Succinate--CoA ligase [ADP-forming] subunit beta from Rhodococcus erythropolis (strain PR4 / NBRC 100887).